The sequence spans 572 residues: Urease subunit alpha (572 aa).

The region spanning 132–572 (GGFDSHIHFI…LPMAQRYFMY (441 aa)) is the Urease domain. Ni(2+)-binding residues include His-137, His-139, and Lys-220. An N6-carboxylysine modification is found at Lys-220. His-222 contacts substrate. The Ni(2+) site is built by His-249 and His-275. His-323 functions as the Proton donor in the catalytic mechanism. Residue Asp-363 coordinates Ni(2+).

The protein belongs to the metallo-dependent hydrolases superfamily. Urease alpha subunit family. Heterotrimer of UreA (gamma), UreB (beta) and UreC (alpha) subunits. Three heterotrimers associate to form the active enzyme. The cofactor is Ni cation. In terms of processing, carboxylation allows a single lysine to coordinate two nickel ions.

It localises to the cytoplasm. The catalysed reaction is urea + 2 H2O + H(+) = hydrogencarbonate + 2 NH4(+). It participates in nitrogen metabolism; urea degradation; CO(2) and NH(3) from urea (urease route): step 1/1. The chain is Urease subunit alpha from Bradyrhizobium diazoefficiens (strain JCM 10833 / BCRC 13528 / IAM 13628 / NBRC 14792 / USDA 110).